Here is a 192-residue protein sequence, read N- to C-terminus: Segregation and condensation protein B (192 aa).

The protein belongs to the ScpB family. In terms of assembly, homodimer. Homodimerization may be required to stabilize the binding of ScpA to the Smc head domains. Component of a cohesin-like complex composed of ScpA, ScpB and the Smc homodimer, in which ScpA and ScpB bind to the head domain of Smc. The presence of the three proteins is required for the association of the complex with DNA.

The protein localises to the cytoplasm. Participates in chromosomal partition during cell division. May act via the formation of a condensin-like complex containing Smc and ScpA that pull DNA away from mid-cell into both cell halves. This chain is Segregation and condensation protein B, found in Mycoplasma mobile (strain ATCC 43663 / 163K / NCTC 11711) (Mesomycoplasma mobile).